The following is a 166-amino-acid chain: NADH-quinone oxidoreductase subunit B (166 aa).

The [4Fe-4S] cluster site is built by cysteine 44, cysteine 45, cysteine 110, and cysteine 140.

Belongs to the complex I 20 kDa subunit family. NDH-1 is composed of 14 different subunits. Subunits NuoB, C, D, E, F, and G constitute the peripheral sector of the complex. It depends on [4Fe-4S] cluster as a cofactor.

The protein localises to the cell membrane. The catalysed reaction is a quinone + NADH + 5 H(+)(in) = a quinol + NAD(+) + 4 H(+)(out). In terms of biological role, NDH-1 shuttles electrons from NADH, via FMN and iron-sulfur (Fe-S) centers, to quinones in the respiratory chain. The immediate electron acceptor for the enzyme in this species is believed to be a menaquinone. Couples the redox reaction to proton translocation (for every two electrons transferred, four hydrogen ions are translocated across the cytoplasmic membrane), and thus conserves the redox energy in a proton gradient. This Carboxydothermus hydrogenoformans (strain ATCC BAA-161 / DSM 6008 / Z-2901) protein is NADH-quinone oxidoreductase subunit B.